The chain runs to 431 residues: UDP-N-acetylglucosamine 1-carboxyvinyltransferase (431 aa).

Residue 24-25 (KN) participates in phosphoenolpyruvate binding. UDP-N-acetyl-alpha-D-glucosamine is bound at residue arginine 95. The Proton donor role is filled by aspartate 119. The UDP-N-acetyl-alpha-D-glucosamine site is built by aspartate 314 and methionine 336.

This sequence belongs to the EPSP synthase family. MurA subfamily.

It localises to the cytoplasm. The catalysed reaction is phosphoenolpyruvate + UDP-N-acetyl-alpha-D-glucosamine = UDP-N-acetyl-3-O-(1-carboxyvinyl)-alpha-D-glucosamine + phosphate. Its pathway is cell wall biogenesis; peptidoglycan biosynthesis. Functionally, cell wall formation. Adds enolpyruvyl to UDP-N-acetylglucosamine. This is UDP-N-acetylglucosamine 1-carboxyvinyltransferase from Bradyrhizobium diazoefficiens (strain JCM 10833 / BCRC 13528 / IAM 13628 / NBRC 14792 / USDA 110).